Consider the following 341-residue polypeptide: Protein pelota homolog (341 aa).

This sequence belongs to the eukaryotic release factor 1 family. Pelota subfamily. In terms of assembly, monomer. The cofactor is a divalent metal cation.

It localises to the cytoplasm. Functionally, may function in recognizing stalled ribosomes, interact with stem-loop structures in stalled mRNA molecules, and effect endonucleolytic cleavage of the mRNA. May play a role in the release non-functional ribosomes and degradation of damaged mRNAs. Has endoribonuclease activity. This chain is Protein pelota homolog, found in Methanoregula boonei (strain DSM 21154 / JCM 14090 / 6A8).